A 3587-amino-acid polypeptide reads, in one-letter code: Tyrocidine synthase 2 (3587 aa).

Residues 466-1045 (AATMHELFSR…IQALAAYVEG (580 aa)) form a domain 1 (Proline-activating) region. 2 Carrier domains span residues 972–1047 (APTT…EGGE) and 2007–2082 (APAT…EHSE). An O-(pantetheine 4'-phosphoryl)serine mark is found at Ser-1007 and Ser-2042. The interval 1522–2081 (EQTAVVFGDK…RDLARLIEHS (560 aa)) is domain 2 (Phenylalanine-activating). The interval 2540 to 3122 (YRADQTIQQL…NSRESEQGVV (583 aa)) is domain 3 (D-phenylalanine-activating). The disordered stretch occupies residues 3017 to 3040 (NDKIDRKALPKPNQEENRTEQYAA). The segment covering 3018 to 3035 (DKIDRKALPKPNQEENRT) has biased composition (basic and acidic residues). Residues 3040–3114 (APQTELEQLL…EAALRVIPNS (75 aa)) enclose the Carrier 3 domain. At Ser-3075 the chain carries O-(pantetheine 4'-phosphoryl)serine.

This sequence belongs to the ATP-dependent AMP-binding enzyme family. In terms of assembly, large multienzyme complex of TycA, TycB and TycC. Pantetheine 4'-phosphate serves as cofactor.

The enzyme catalyses L-phenylalanine + ATP + H2O = D-phenylalanine + AMP + diphosphate + H(+). Its pathway is antibiotic biosynthesis; tyrocidine biosynthesis. Its function is as follows. Activates the second to fourth amino acids in tyrocidine (in tyrocidine A, Pro, Phe, and D-Phe) and epimerizes the last one. The sequence is that of Tyrocidine synthase 2 (tycB) from Brevibacillus parabrevis.